Consider the following 265-residue polypeptide: Glutamate racemase (265 aa).

Residues 9–10 (DS) and 41–42 (YG) contribute to the substrate site. Cys-72 serves as the catalytic Proton donor/acceptor. 73–74 (NT) serves as a coordination point for substrate. The active-site Proton donor/acceptor is Cys-183. Residue 184 to 185 (TH) coordinates substrate.

This sequence belongs to the aspartate/glutamate racemases family.

The enzyme catalyses L-glutamate = D-glutamate. It participates in cell wall biogenesis; peptidoglycan biosynthesis. Functionally, provides the (R)-glutamate required for cell wall biosynthesis. The protein is Glutamate racemase of Lysinibacillus sphaericus (strain C3-41).